The following is a 547-amino-acid chain: MNAFTRAWYALERHYQDTRHVLLRDRFACEPDRFERMHERLDGMLFDYSKNRLGEDTLQLLCNLADAADLEGKMRALRTGAKVNGSEGRAALHTALRLPDGADAVYVDGRDVLPEIRRELNRALKFAHSLDDGSYQGITGKRITDFVHIGIGGSDLGPAMCVQALEPFRRHITVHFAANADPACLDAVLCRLNPETTVFCVASKSFKTPETLLNAQAVKAWYRGAGFSESETACHFCAVSADTAAAAAFGIAAERVFAMYDWVGGRYSVWSPVGLPVMVAVGGARFRELLAGAHAMDRHFFSTPTRHNIPVLMALIAVWYNNFQHADGQTAVPYSHNLRLLPAWLNQLDMESLGKSRASDGSPAVCKTGGIVFGGEGVNCQHAYFQLLHQGTRLIPCDFIVPMTAQGREDGRSRFTVANAFAQAEALMKGKTLDEARAELADLPEAERERLAPHKEFPGNRPSNSILIDRLTPYNLGMLMAAYEHKTFVQGAIWNVNPFDQWGVEYGKQLAKTIIGELEGGTSVHDASTEGLMAFYRECRLKGGGAA.

Catalysis depends on Glu-351, which acts as the Proton donor. Residues His-382 and Lys-508 contribute to the active site.

Belongs to the GPI family.

The protein resides in the cytoplasm. It carries out the reaction alpha-D-glucose 6-phosphate = beta-D-fructose 6-phosphate. It participates in carbohydrate biosynthesis; gluconeogenesis. Its pathway is carbohydrate degradation; glycolysis; D-glyceraldehyde 3-phosphate and glycerone phosphate from D-glucose: step 2/4. In terms of biological role, catalyzes the reversible isomerization of glucose-6-phosphate to fructose-6-phosphate. The chain is Glucose-6-phosphate isomerase 2 from Neisseria meningitidis serogroup B (strain ATCC BAA-335 / MC58).